The chain runs to 173 residues: Crossover junction endodeoxyribonuclease RuvC (173 aa).

Catalysis depends on residues aspartate 8, glutamate 67, and aspartate 139. Mg(2+) contacts are provided by aspartate 8, glutamate 67, and aspartate 139.

The protein belongs to the RuvC family. In terms of assembly, homodimer which binds Holliday junction (HJ) DNA. The HJ becomes 2-fold symmetrical on binding to RuvC with unstacked arms; it has a different conformation from HJ DNA in complex with RuvA. In the full resolvosome a probable DNA-RuvA(4)-RuvB(12)-RuvC(2) complex forms which resolves the HJ. Mg(2+) is required as a cofactor.

Its subcellular location is the cytoplasm. The enzyme catalyses Endonucleolytic cleavage at a junction such as a reciprocal single-stranded crossover between two homologous DNA duplexes (Holliday junction).. Functionally, the RuvA-RuvB-RuvC complex processes Holliday junction (HJ) DNA during genetic recombination and DNA repair. Endonuclease that resolves HJ intermediates. Cleaves cruciform DNA by making single-stranded nicks across the HJ at symmetrical positions within the homologous arms, yielding a 5'-phosphate and a 3'-hydroxyl group; requires a central core of homology in the junction. The consensus cleavage sequence is 5'-(A/T)TT(C/G)-3'. Cleavage occurs on the 3'-side of the TT dinucleotide at the point of strand exchange. HJ branch migration catalyzed by RuvA-RuvB allows RuvC to scan DNA until it finds its consensus sequence, where it cleaves and resolves the cruciform DNA. This chain is Crossover junction endodeoxyribonuclease RuvC, found in Vibrio parahaemolyticus serotype O3:K6 (strain RIMD 2210633).